Reading from the N-terminus, the 130-residue chain is Small ribosomal subunit protein uS9 (130 aa).

This sequence belongs to the universal ribosomal protein uS9 family.

The polypeptide is Small ribosomal subunit protein uS9 (Edwardsiella ictaluri (strain 93-146)).